The following is an 89-amino-acid chain: Large ribosomal subunit protein uL29 (89 aa).

This sequence belongs to the universal ribosomal protein uL29 family.

The protein is Large ribosomal subunit protein uL29 of Frankia alni (strain DSM 45986 / CECT 9034 / ACN14a).